Consider the following 512-residue polypeptide: Tabersonine 16-hydroxylase 2 (512 aa).

A topological domain (lumenal) is located at residue Met1. A helical transmembrane segment spans residues 2–22 (ELYYFSTFAFLLFCFILAKTL). Residues 23–512 (KKSGQSNLKL…YSASSLKGKY (490 aa)) lie on the Cytoplasmic side of the membrane. Residue Cys445 coordinates heme.

This sequence belongs to the cytochrome P450 family. Heme serves as cofactor. Expressed at low levels in roots, fruits, stems, flower buds and flowers, but highly expressed in young leaves. Detected in adaxial and abaxial epidermis cells.

The protein localises to the endoplasmic reticulum membrane. It carries out the reaction (-)-tabersonine + reduced [NADPH--hemoprotein reductase] + O2 = 16-hydroxytabersonine + oxidized [NADPH--hemoprotein reductase] + H2O + H(+). Functionally, involved in the foliar biosynthesis of vindoline, a precursor of vinblastine and vincristine. Hydroxylates specifically tabersonine, 2,3-dihydrotabersonine and 2,3-dihydro-3-hydroxytabersonine, but has no activity with naringenin, tryptamine, secologanin, strictosidine, ajmalicine, vindoline and catharanthine. This is Tabersonine 16-hydroxylase 2 from Catharanthus roseus (Madagascar periwinkle).